The following is a 252-amino-acid chain: Thiazole synthase (252 aa).

Lys-91 (schiff-base intermediate with DXP) is an active-site residue. Residues Gly-152, 179 to 180 (AG), and 201 to 202 (NT) contribute to the 1-deoxy-D-xylulose 5-phosphate site.

It belongs to the ThiG family. In terms of assembly, homotetramer. Forms heterodimers with either ThiH or ThiS.

It is found in the cytoplasm. It catalyses the reaction [ThiS sulfur-carrier protein]-C-terminal-Gly-aminoethanethioate + 2-iminoacetate + 1-deoxy-D-xylulose 5-phosphate = [ThiS sulfur-carrier protein]-C-terminal Gly-Gly + 2-[(2R,5Z)-2-carboxy-4-methylthiazol-5(2H)-ylidene]ethyl phosphate + 2 H2O + H(+). It functions in the pathway cofactor biosynthesis; thiamine diphosphate biosynthesis. In terms of biological role, catalyzes the rearrangement of 1-deoxy-D-xylulose 5-phosphate (DXP) to produce the thiazole phosphate moiety of thiamine. Sulfur is provided by the thiocarboxylate moiety of the carrier protein ThiS. In vitro, sulfur can be provided by H(2)S. The chain is Thiazole synthase from Erwinia pyrifoliae (strain DSM 12162 / Ep1/96).